Reading from the N-terminus, the 619-residue chain is Dihydroxy-acid dehydratase (619 aa).

Asp80 is a binding site for Mg(2+). Cys121 serves as a coordination point for [2Fe-2S] cluster. Mg(2+) contacts are provided by Asp122 and Lys123. Lys123 is subject to N6-carboxylysine. Cys196 serves as a coordination point for [2Fe-2S] cluster. Glu492 lines the Mg(2+) pocket. Ser518 serves as the catalytic Proton acceptor.

Belongs to the IlvD/Edd family. In terms of assembly, homodimer. Requires [2Fe-2S] cluster as cofactor. Mg(2+) serves as cofactor.

The enzyme catalyses (2R)-2,3-dihydroxy-3-methylbutanoate = 3-methyl-2-oxobutanoate + H2O. The catalysed reaction is (2R,3R)-2,3-dihydroxy-3-methylpentanoate = (S)-3-methyl-2-oxopentanoate + H2O. It functions in the pathway amino-acid biosynthesis; L-isoleucine biosynthesis; L-isoleucine from 2-oxobutanoate: step 3/4. Its pathway is amino-acid biosynthesis; L-valine biosynthesis; L-valine from pyruvate: step 3/4. Functions in the biosynthesis of branched-chain amino acids. Catalyzes the dehydration of (2R,3R)-2,3-dihydroxy-3-methylpentanoate (2,3-dihydroxy-3-methylvalerate) into 2-oxo-3-methylpentanoate (2-oxo-3-methylvalerate) and of (2R)-2,3-dihydroxy-3-methylbutanoate (2,3-dihydroxyisovalerate) into 2-oxo-3-methylbutanoate (2-oxoisovalerate), the penultimate precursor to L-isoleucine and L-valine, respectively. The chain is Dihydroxy-acid dehydratase from Bifidobacterium adolescentis (strain ATCC 15703 / DSM 20083 / NCTC 11814 / E194a).